The following is a 595-amino-acid chain: Aspartate--tRNA(Asp/Asn) ligase (595 aa).

Position 175 (glutamate 175) interacts with L-aspartate. Residues 199 to 202 form an aspartate region; that stretch reads QQYK. Arginine 221 and histidine 454 together coordinate L-aspartate. 221 to 223 provides a ligand contact to ATP; that stretch reads RDE. Glutamate 488 contributes to the ATP binding site. Arginine 495 is a binding site for L-aspartate. 540-543 contacts ATP; the sequence is GIDR.

This sequence belongs to the class-II aminoacyl-tRNA synthetase family. Type 1 subfamily. As to quaternary structure, homodimer.

The protein resides in the cytoplasm. The catalysed reaction is tRNA(Asx) + L-aspartate + ATP = L-aspartyl-tRNA(Asx) + AMP + diphosphate. Functionally, aspartyl-tRNA synthetase with relaxed tRNA specificity since it is able to aspartylate not only its cognate tRNA(Asp) but also tRNA(Asn). Reaction proceeds in two steps: L-aspartate is first activated by ATP to form Asp-AMP and then transferred to the acceptor end of tRNA(Asp/Asn). In Rhizobium meliloti (strain 1021) (Ensifer meliloti), this protein is Aspartate--tRNA(Asp/Asn) ligase.